The sequence spans 156 residues: ATP synthase subunit b (156 aa).

A helical membrane pass occupies residues 7–27 (LIGQTVAFIIFVWFCMKFVWP).

It belongs to the ATPase B chain family. F-type ATPases have 2 components, F(1) - the catalytic core - and F(0) - the membrane proton channel. F(1) has five subunits: alpha(3), beta(3), gamma(1), delta(1), epsilon(1). F(0) has three main subunits: a(1), b(2) and c(10-14). The alpha and beta chains form an alternating ring which encloses part of the gamma chain. F(1) is attached to F(0) by a central stalk formed by the gamma and epsilon chains, while a peripheral stalk is formed by the delta and b chains.

The protein localises to the cell inner membrane. F(1)F(0) ATP synthase produces ATP from ADP in the presence of a proton or sodium gradient. F-type ATPases consist of two structural domains, F(1) containing the extramembraneous catalytic core and F(0) containing the membrane proton channel, linked together by a central stalk and a peripheral stalk. During catalysis, ATP synthesis in the catalytic domain of F(1) is coupled via a rotary mechanism of the central stalk subunits to proton translocation. Functionally, component of the F(0) channel, it forms part of the peripheral stalk, linking F(1) to F(0). This is ATP synthase subunit b from Shewanella baltica (strain OS155 / ATCC BAA-1091).